The following is a 400-amino-acid chain: Large envelope protein (400 aa).

At Met-1 the chain carries N-acetylmethionine. Disordered stretches follow at residues Met-1–Phe-24 and Pro-89–His-116. Gly-2 carries the N-myristoyl glycine; by host lipid modification. Residues Gly-2–Ala-119 are pre-S1. Residues Gly-2–Asn-174 are pre-S. Residues Gly-2–Gly-181 lie on the Virion surface; in external conformation side of the membrane. Residues Gly-2 to Arg-253 are Intravirion; in internal conformation-facing. An N-linked (GlcNAc...) asparagine glycan is attached at Trp-4. The segment covering Ser-96–Thr-106 has biased composition (polar residues). A pre-S2 region spans residues Met-120–Asn-174. The chain crosses the membrane as a helical span at residues Phe-182–Ile-202. The Intravirion; in external conformation portion of the chain corresponds to Pro-203–Arg-253. The chain crosses the membrane as a helical span at residues Phe-254–Tyr-274. Residues Gln-275–Ser-348 lie on the Virion surface side of the membrane. The N-linked (GlcNAc...) asparagine; by host glycan is linked to Asn-320. The chain crosses the membrane as a helical span at residues Leu-349–Ile-369. The Intravirion portion of the chain corresponds to Trp-370–Trp-375. The chain crosses the membrane as a helical span at residues Gly-376–Val-398. Residues Tyr-399 to Ile-400 lie on the Virion surface side of the membrane.

This sequence belongs to the orthohepadnavirus major surface antigen family. In its internal form (Li-HBsAg), interacts with the capsid protein and with the isoform S. Interacts with host chaperone CANX. As to quaternary structure, associates with host chaperone CANX through its pre-S2 N glycan; this association may be essential for isoform M proper secretion. In terms of assembly, interacts with isoform L. Interacts with the antigens of satellite virus HDV (HDVAgs); this interaction is required for encapsidation of HDV genomic RNA. Isoform M is N-terminally acetylated by host at a ratio of 90%, and N-glycosylated by host at the pre-S2 region. Post-translationally, myristoylated.

Its subcellular location is the virion membrane. Its function is as follows. The large envelope protein exists in two topological conformations, one which is termed 'external' or Le-HBsAg and the other 'internal' or Li-HBsAg. In its external conformation the protein attaches the virus to cell receptors and thereby initiating infection. This interaction determines the species specificity and liver tropism. This attachment induces virion internalization predominantly through caveolin-mediated endocytosis. The large envelope protein also assures fusion between virion membrane and endosomal membrane. In its internal conformation the protein plays a role in virion morphogenesis and mediates the contact with the nucleocapsid like a matrix protein. In terms of biological role, the middle envelope protein plays an important role in the budding of the virion. It is involved in the induction of budding in a nucleocapsid independent way. In this process the majority of envelope proteins bud to form subviral lipoprotein particles of 22 nm of diameter that do not contain a nucleocapsid. In Hepatitis B virus genotype A1 subtype adw (isolate Philippines/pFDW294/1988) (HBV-A), this protein is Large envelope protein.